Here is a 231-residue protein sequence, read N- to C-terminus: S-norcoclaurine synthase 2 (231 aa).

Tyrosine 107–glutamate 109 is a dopamine binding site. Lysine 121 (proton donor) is an active-site residue. (4-hydroxyphenyl)acetaldehyde is bound at residue aspartate 140. Residues leucine 210–proline 230 traverse the membrane as a helical segment.

It belongs to the BetVI family. As to expression, expressed in roots, stems and leaves. Detected in flower buds and germinating seeds. Low expression in carpels. Restricted to sieve elements of the phloem adjacent or proximal to laticifers.

Its subcellular location is the endoplasmic reticulum membrane. The protein localises to the vacuole membrane. It catalyses the reaction (4-hydroxyphenyl)acetaldehyde + dopamine = (S)-norcoclaurine + H2O. The protein operates within alkaloid biosynthesis; (S)-reticuline biosynthesis. With respect to regulation, activity doubles within 5 hours of elicitor treatment and continues to increase for at least 80 hours. Involved in the biosynthesis of (S)-coclaurine, the common precursor of all benzylisoquinoline alkaloids such as morphine, sanguinarine, codeine or papaverine. Condenses dopamine and 4-hydroxyphenylacetaldehyde. The sequence is that of S-norcoclaurine synthase 2 from Papaver somniferum (Opium poppy).